The chain runs to 297 residues: HTH-type transcriptional regulator ArgP (297 aa).

Residues 4–60 (PDYRTLQALDAVIRERGFERAAQKLCITQSAVSQRIKQLENMFGQPLLVRTVPPRPT) enclose the HTH lysR-type domain. The H-T-H motif DNA-binding region spans 21-40 (FERAAQKLCITQSAVSQRIK).

Belongs to the LysR transcriptional regulatory family. As to quaternary structure, homodimer.

Functionally, controls the transcription of genes involved in arginine and lysine metabolism. The polypeptide is HTH-type transcriptional regulator ArgP (Enterobacter sp. (strain 638)).